The sequence spans 86 residues: Small ribosomal subunit protein bS20 (86 aa).

The protein belongs to the bacterial ribosomal protein bS20 family.

Functionally, binds directly to 16S ribosomal RNA. In Bifidobacterium longum (strain DJO10A), this protein is Small ribosomal subunit protein bS20.